We begin with the raw amino-acid sequence, 179 residues long: Small ribosomal subunit protein uS7 (179 aa).

Belongs to the universal ribosomal protein uS7 family. In terms of assembly, part of the 30S ribosomal subunit. Contacts proteins S9 and S11.

One of the primary rRNA binding proteins, it binds directly to 16S rRNA where it nucleates assembly of the head domain of the 30S subunit. Is located at the subunit interface close to the decoding center, probably blocks exit of the E-site tRNA. The protein is Small ribosomal subunit protein uS7 of Shigella flexneri serotype 5b (strain 8401).